Consider the following 112-residue polypeptide: NADH-quinone oxidoreductase subunit K (112 aa).

Transmembrane regions (helical) follow at residues 14-34 (LEGYLTVAAIMFAIGAWGALI), 39-59 (VVVFMCVELMINAVNLTLVAF), and 76-96 (LIIAIAAAEVAVGLAIVLAIF).

Belongs to the complex I subunit 4L family. As to quaternary structure, NDH-1 is composed of 14 different subunits. Subunits NuoA, H, J, K, L, M, N constitute the membrane sector of the complex.

It is found in the cell membrane. It catalyses the reaction a quinone + NADH + 5 H(+)(in) = a quinol + NAD(+) + 4 H(+)(out). In terms of biological role, NDH-1 shuttles electrons from NADH, via FMN and iron-sulfur (Fe-S) centers, to quinones in the respiratory chain. The immediate electron acceptor for the enzyme in this species is believed to be a menaquinone. Couples the redox reaction to proton translocation (for every two electrons transferred, four hydrogen ions are translocated across the cytoplasmic membrane), and thus conserves the redox energy in a proton gradient. This chain is NADH-quinone oxidoreductase subunit K, found in Rubrobacter xylanophilus (strain DSM 9941 / JCM 11954 / NBRC 16129 / PRD-1).